A 288-amino-acid polypeptide reads, in one-letter code: MAPPAASGIPSIAPSLGPTAVWLGNRSDLGDVQALASRDLPTTTVTAGNNNKPEHLEYVAFVLVPVFFIMGLLGILICHVLKKKGYRCTTEAEEVEEEEKPDEKIEMNETAHENSDTVGQIINYIMKNEANADVLKAMVADSSVFEPESPMSPNAPGSPTSPGSPLSPGAASLKHNCKGHHLHTVGGVIEKDVCSRCSHKRWHHIKPAHKSKEHRRSRLGEVTVLSVGRFRVTKVEHKSNSKERKSLMSVTGVEGLNGDMPATPVKQEAKEAPATPVKEGTQERRSSE.

Positions 1-23 (MAPPAASGIPSIAPSLGPTAVWL) are cleaved as a signal peptide. The Extracellular portion of the chain corresponds to 24 to 57 (GNRSDLGDVQALASRDLPTTTVTAGNNNKPEHLE). The N-linked (GlcNAc...) asparagine glycan is linked to Asn-25. Residues 58 to 78 (YVAFVLVPVFFIMGLLGILIC) traverse the membrane as a helical segment. Residues 79 to 288 (HVLKKKGYRC…EGTQERRSSE (210 aa)) are Cytoplasmic-facing. Disordered stretches follow at residues 145 to 172 (FEPESPMSPNAPGSPTSPGSPLSPGAAS) and 237 to 288 (HKSN…RSSE). Positions 152–172 (SPNAPGSPTSPGSPLSPGAAS) are enriched in low complexity. Positions 237 to 246 (HKSNSKERKS) are enriched in basic and acidic residues.

Belongs to the RELT family.

Its subcellular location is the cell membrane. In Gallus gallus (Chicken), this protein is RELT-like protein 1 (RELL1).